Consider the following 627-residue polypeptide: Phosphomethylpyrimidine synthase (627 aa).

Residues Asn233, Met262, Tyr291, His327, 347 to 349, 388 to 391, and Glu427 each bind substrate; these read SRG and DGLR. A Zn(2+)-binding site is contributed by His431. Substrate is bound at residue Tyr454. His495 provides a ligand contact to Zn(2+). The [4Fe-4S] cluster site is built by Cys575, Cys578, and Cys583.

The protein belongs to the ThiC family. In terms of assembly, homodimer. [4Fe-4S] cluster serves as cofactor.

It carries out the reaction 5-amino-1-(5-phospho-beta-D-ribosyl)imidazole + S-adenosyl-L-methionine = 4-amino-2-methyl-5-(phosphooxymethyl)pyrimidine + CO + 5'-deoxyadenosine + formate + L-methionine + 3 H(+). The protein operates within cofactor biosynthesis; thiamine diphosphate biosynthesis. Catalyzes the synthesis of the hydroxymethylpyrimidine phosphate (HMP-P) moiety of thiamine from aminoimidazole ribotide (AIR) in a radical S-adenosyl-L-methionine (SAM)-dependent reaction. In Acidithiobacillus ferrooxidans (strain ATCC 23270 / DSM 14882 / CIP 104768 / NCIMB 8455) (Ferrobacillus ferrooxidans (strain ATCC 23270)), this protein is Phosphomethylpyrimidine synthase.